The chain runs to 277 residues: MDIQTVLSDLKLNGKVIPVVGGDVNQTYRIKTEHRAYFLKIHPNVKKGFFEAEVDGLKELSAFVRVPDTYMLGETSEGAYLLMEWIEPGKGDQRDLAAALANLHQQTAPQFGFRKDNYLGTLVQKNSFEEDWWTFFFKDRLESQISLAEETNRWNVQRQEKYLRFKERVLKSVEPKKITPRLLHGDLWSGNVFFDQQGHPVFVDPAVSYGNREQDIAMSQLFGGFRPEFLDAYQTIFPLEKGWKDRLPIYQLYYLLAHLNMFGESYGSQVDQLLENF.

An ATP-binding site is contributed by E84–I86. The Proton acceptor role is filled by D186.

The protein belongs to the fructosamine kinase family.

It carries out the reaction N(6)-(D-ribulosyl)-L-lysine + ATP = N(6)-(3-O-phospho-D-ribulosyl)-L-lysine + ADP + H(+). It catalyses the reaction N-(D-ribulosyl)-cadaverine + ATP = N-(3-O-phospho-D-ribulosyl)-cadaverine + ADP + H(+). The enzyme catalyses N(6)-(D-erythrulosyl)-L-lysine + ATP = N(6)-(3-O-phospho-D-erythrulosyl)-L-lysine + ADP + H(+). The catalysed reaction is N-(D-erythrulosyl)-cadaverine + ATP = N-(3-O-phospho-D-erythrulosyl)-cadaverine + ADP + H(+). It carries out the reaction N(6)-D-ribulosyl-L-lysyl-[protein] + ATP = N(6)-(3-O-phospho-D-ribulosyl)-L-lysyl-[protein] + ADP + H(+). It catalyses the reaction N(6)-(D-erythrulosyl)-L-lysyl-[protein] + ATP = N(6)-(3-O-phospho-D-erythrulosyl)-L-lysyl-[protein] + ADP + H(+). Ketoamine kinase that phosphorylates ketoamines, such as erythruloselysine, erythrulosecadaverine, ribuloselysine and ribulosecadaverine, on the third carbon of the sugar moiety to generate ketoamine 3-phosphate. Has higher activity on free lysine (erythruloselysine and ribuloselysine), than on ribuloselysine and erythruloselysine residues on glycated proteins. The polypeptide is Probable ketoamine kinase HMPREF0351_12196 (Enterococcus faecium (strain ATCC BAA-472 / TX0016 / DO)).